The primary structure comprises 334 residues: N-acetylmuramate/N-acetylglucosamine kinase (334 aa).

The protein belongs to the kinase AmgK family.

It carries out the reaction N-acetyl-D-muramate + ATP = N-acetyl-alpha-D-muramate 1-phosphate + ADP + H(+). The catalysed reaction is N-acetyl-D-glucosamine + ATP = N-acetyl-alpha-D-glucosamine 1-phosphate + ADP + H(+). Its pathway is cell wall biogenesis; peptidoglycan recycling. Its function is as follows. Sugar kinase that catalyzes the ATP-dependent phosphorylation of N-acetylmuramate (MurNAc) and N-acetylglucosamine (GlcNAc) at its C1 hydroxyl group, leading to MurNAc alpha-1P and GlcNAc alpha-1P, respectively. Is likely involved in peptidoglycan recycling as part of a cell wall recycling pathway that bypasses de novo biosynthesis of the peptidoglycan precursor UDP-MurNAc. Is able to complement the fosfomycin sensitivity phenotype of a P.putida mutant lacking amgK. In Neisseria meningitidis serogroup B (strain ATCC BAA-335 / MC58), this protein is N-acetylmuramate/N-acetylglucosamine kinase.